Reading from the N-terminus, the 246-residue chain is UDP-N-acetyl-D-mannosaminuronic acid transferase (246 aa).

Belongs to the glycosyltransferase 26 family.

The enzyme catalyses UDP-N-acetyl-alpha-D-mannosaminouronate + N-acetyl-alpha-D-glucosaminyl-di-trans,octa-cis-undecaprenyl diphosphate = beta-D-ManNAcA-(1-&gt;4)-alpha-D-GlcNAc-di-trans,octa-cis-undecaprenyl diphosphate + UDP + H(+). The protein operates within bacterial outer membrane biogenesis; enterobacterial common antigen biosynthesis. Its function is as follows. Catalyzes the synthesis of Und-PP-GlcNAc-ManNAcA (Lipid II), the second lipid-linked intermediate involved in enterobacterial common antigen (ECA) synthesis. This is UDP-N-acetyl-D-mannosaminuronic acid transferase from Escherichia coli (strain K12).